Reading from the N-terminus, the 680-residue chain is Methionine--tRNA ligase (680 aa).

A 'HIGH' region motif is present at residues 14–24 (PYANGPIHLGH). Zn(2+) contacts are provided by cysteine 145, cysteine 148, cysteine 158, and cysteine 161. Residues 330-334 (KMSKS) carry the 'KMSKS' region motif. Position 333 (lysine 333) interacts with ATP. The 102-residue stretch at 579–680 (DFAKVDFRIA…DGAQPGMRVK (102 aa)) folds into the tRNA-binding domain.

It belongs to the class-I aminoacyl-tRNA synthetase family. MetG type 1 subfamily. In terms of assembly, homodimer. The cofactor is Zn(2+).

Its subcellular location is the cytoplasm. The catalysed reaction is tRNA(Met) + L-methionine + ATP = L-methionyl-tRNA(Met) + AMP + diphosphate. Its function is as follows. Is required not only for elongation of protein synthesis but also for the initiation of all mRNA translation through initiator tRNA(fMet) aminoacylation. The polypeptide is Methionine--tRNA ligase (Hydrogenovibrio crunogenus (strain DSM 25203 / XCL-2) (Thiomicrospira crunogena)).